The sequence spans 1057 residues: Protein transport protein Sec16B (1057 aa).

The segment covering 1–15 has biased composition (polar residues); sequence MELWVPQTQGRTTGP. A disordered region spans residues 1-86; it reads MELWVPQTQG…VSGADYLKGS (86 aa). Residues 45-63 show a composition bias toward basic and acidic residues; it reads QDTHKNSKPQQDPRDDHQQ. Phosphoserine occurs at positions 70, 137, 161, and 185. Positions 185 to 220 are disordered; sequence SAFGLEQPGEFFPESGAQKQKPSLTSKSNLLQQHES. The segment covering 201-213 has biased composition (polar residues); it reads AQKQKPSLTSKSN. Serine 245 bears the Phosphoserine mark. The central conserved domain (CCD); required for localization to endoplasmic reticulum exit sites stretch occupies residues 263 to 708; it reads APMRFYVPHV…KHKELEQTRT (446 aa). The segment covering 704–715 has biased composition (basic and acidic residues); sequence EQTRTGDLRDPD. Disordered stretches follow at residues 704–778 and 849–1057; these read EQTR…TYSE and AVIS…SQPC. A compositionally biased stretch (polar residues) spans 737–764; the sequence is GQQNYSEDSEYSSALWPTSEQTSLTNPT. The residue at position 856 (threonine 856) is a Phosphothreonine. Serine 866, serine 869, serine 872, and serine 881 each carry phosphoserine. The span at 883 to 903 shows a compositional bias: basic and acidic residues; that stretch reads GADKPPHPDASQKEKLRDGKN. Residues 906-926 are compositionally biased toward low complexity; sequence SSGFGWFSWFRSKPASSVSTS. The span at 927–938 shows a compositional bias: acidic residues; it reads GDEDSVDSSDSE. Over residues 990-999 the composition is skewed to gly residues; the sequence is EGVGIGGFSG. A compositionally biased stretch (polar residues) spans 1028-1043; that stretch reads NPSQVPQLPTASSLNR.

Belongs to the SEC16 family. In terms of assembly, SEC16A and SEC16B are each present in multiple copies in a heteromeric complex. Interacts with TFG. Interacts with SEC13. Liver, kidney, heart, spleen and brain.

It localises to the endoplasmic reticulum membrane. Its subcellular location is the golgi apparatus membrane. Plays a role in the organization of the endoplasmic reticulum exit sites (ERES), also known as transitional endoplasmic reticulum (tER). Required for secretory cargo traffic from the endoplasmic reticulum to the Golgi apparatus. Involved in peroxisome biogenesis. Regulates the transport of peroxisomal biogenesis factors PEX3 and PEX16 from the ER to peroxisomes. This chain is Protein transport protein Sec16B (Sec16b), found in Rattus norvegicus (Rat).